A 161-amino-acid polypeptide reads, in one-letter code: MAKTKAVIPGSFDPITYGHIDIIERSAGRFDELHICVLKNSNKTGTFNIDERMALIEESVKHLSNVEVHNYNGLLVDFCDKIGAQTIIRGLRAVSDFEYELRLTSMNKKLNSNVETMYMMTSTNYSFISSSVVKEVAQYKADISDFVPPNVEKALKEKFKK.

Residue serine 11 participates in substrate binding. ATP contacts are provided by residues 11 to 12 (SF) and histidine 19. Substrate-binding residues include lysine 43, leucine 75, and arginine 89. ATP is bound by residues 90 to 92 (GLR), glutamate 100, and 125 to 131 (YSFISSS).

It belongs to the bacterial CoaD family. As to quaternary structure, homohexamer. The cofactor is Mg(2+).

Its subcellular location is the cytoplasm. The catalysed reaction is (R)-4'-phosphopantetheine + ATP + H(+) = 3'-dephospho-CoA + diphosphate. Its pathway is cofactor biosynthesis; coenzyme A biosynthesis; CoA from (R)-pantothenate: step 4/5. Functionally, reversibly transfers an adenylyl group from ATP to 4'-phosphopantetheine, yielding dephospho-CoA (dPCoA) and pyrophosphate. This chain is Phosphopantetheine adenylyltransferase, found in Staphylococcus haemolyticus (strain JCSC1435).